A 216-amino-acid polypeptide reads, in one-letter code: Probable nicotinate-nucleotide adenylyltransferase (216 aa).

This sequence belongs to the NadD family.

The enzyme catalyses nicotinate beta-D-ribonucleotide + ATP + H(+) = deamido-NAD(+) + diphosphate. It participates in cofactor biosynthesis; NAD(+) biosynthesis; deamido-NAD(+) from nicotinate D-ribonucleotide: step 1/1. Functionally, catalyzes the reversible adenylation of nicotinate mononucleotide (NaMN) to nicotinic acid adenine dinucleotide (NaAD). The chain is Probable nicotinate-nucleotide adenylyltransferase from Marinobacter nauticus (strain ATCC 700491 / DSM 11845 / VT8) (Marinobacter aquaeolei).